Here is a 794-residue protein sequence, read N- to C-terminus: Histone-lysine N-methyltransferase, H3 lysine-9 specific SUVH5 (794 aa).

Disordered regions lie at residues valine 187–isoleucine 210 and serine 254–glutamate 276. The segment covering asparagine 194 to glycine 203 has biased composition (polar residues). The span at proline 258–glutamate 276 shows a compositional bias: basic and acidic residues. In terms of domain architecture, YDG spans glycine 365–arginine 515. The 60-residue stretch at lysine 585 to glycine 644 folds into the Pre-SET domain. Positions isoleucine 647 to asparagine 764 constitute an SET domain. The 17-residue stretch at lysine 778–tyrosine 794 folds into the Post-SET domain.

Belongs to the class V-like SAM-binding methyltransferase superfamily. Histone-lysine methyltransferase family. Suvar3-9 subfamily. In terms of tissue distribution, expressed in leaves stems and flowers.

Its subcellular location is the nucleus. It localises to the chromosome. The protein localises to the centromere. It catalyses the reaction N(6)-methyl-L-lysyl(9)-[histone H3] + S-adenosyl-L-methionine = N(6),N(6)-dimethyl-L-lysyl(9)-[histone H3] + S-adenosyl-L-homocysteine + H(+). The enzyme catalyses L-lysyl(9)-[histone H3] + S-adenosyl-L-methionine = N(6)-methyl-L-lysyl(9)-[histone H3] + S-adenosyl-L-homocysteine + H(+). Its function is as follows. Histone methyltransferase. Methylates 'Lys-9' of histone H3. H3 'Lys-9' methylation represents a specific tag for epigenetic transcriptional repression. The sequence is that of Histone-lysine N-methyltransferase, H3 lysine-9 specific SUVH5 (SUVH5) from Arabidopsis thaliana (Mouse-ear cress).